We begin with the raw amino-acid sequence, 1201 residues long: ATP-dependent helicase/deoxyribonuclease subunit B (1201 aa).

Belongs to the helicase family. AddB/RexB type 2 subfamily. In terms of assembly, heterodimer of AddA and RexB. It depends on Mg(2+) as a cofactor.

The heterodimer acts as both an ATP-dependent DNA helicase and an ATP-dependent, dual-direction single-stranded exonuclease. Recognizes the chi site generating a DNA molecule suitable for the initiation of homologous recombination. This subunit has 5' -&gt; 3' nuclease activity but not helicase activity. In Levilactobacillus brevis (strain ATCC 367 / BCRC 12310 / CIP 105137 / JCM 1170 / LMG 11437 / NCIMB 947 / NCTC 947) (Lactobacillus brevis), this protein is ATP-dependent helicase/deoxyribonuclease subunit B.